Reading from the N-terminus, the 284-residue chain is Homeobox-leucine zipper protein HAT4 (284 aa).

Residues 48-59 (ESFTSSVPNSDS) show a composition bias toward polar residues. The segment at 48-132 (ESFTSSVPNS…DGDNSRKKLR (85 aa)) is disordered. Over residues 89–100 (VSSPNSTVSSST) the composition is skewed to low complexity. The segment at residues 126-185 (NSRKKLRLSKDQSAILEETFKDHSTLNPKQKQALAKQLGLRARQVEVWFQNRRARTKLKQ) is a DNA-binding region (homeobox). The tract at residues 193–214 (LRRCCENLTEENRRLQKEVTEL) is leucine-zipper.

Belongs to the HD-ZIP homeobox family. Class II subfamily. As to quaternary structure, interacts with DNA as homodimer. Predominantly expressed in leaves and stems.

It is found in the nucleus. Its function is as follows. Probable transcription factor involved in the negative regulation of cell elongation and specific cell proliferation processes such as lateral root formation and secondary growth of the vascular system. Acts as a mediator of the red/far-red light effects on leaf cell expansion in the shading response. Binds to the DNA sequence 5'-CAAT[GC]ATTG-3'. Negatively regulates its own expression. The protein is Homeobox-leucine zipper protein HAT4 (HAT4) of Arabidopsis thaliana (Mouse-ear cress).